We begin with the raw amino-acid sequence, 148 residues long: Large ribosomal subunit protein uL15 (148 aa).

The tract at residues 1–61 is disordered; sequence MKINDLKPAP…GGQMPLQRRV (61 aa).

This sequence belongs to the universal ribosomal protein uL15 family. Part of the 50S ribosomal subunit.

In terms of biological role, binds to the 23S rRNA. The protein is Large ribosomal subunit protein uL15 of Thermodesulfovibrio yellowstonii (strain ATCC 51303 / DSM 11347 / YP87).